Consider the following 334-residue polypeptide: Protein-glutamate methylesterase/protein-glutamine glutaminase 1 (334 aa).

The Response regulatory domain occupies 2–120 (NIGIVNDLPL…GAAGDTTKLL (119 aa)). Asp-53 carries the 4-aspartylphosphate modification. One can recognise a CheB-type methylesterase domain in the interval 145 to 334 (RAGGGPLIAI…AGELAALARI (190 aa)). Active-site residues include Ser-157, His-184, and Asp-277.

This sequence belongs to the CheB family. Post-translationally, phosphorylated by CheA. Phosphorylation of the N-terminal regulatory domain activates the methylesterase activity.

Its subcellular location is the cytoplasm. It catalyses the reaction [protein]-L-glutamate 5-O-methyl ester + H2O = L-glutamyl-[protein] + methanol + H(+). It carries out the reaction L-glutaminyl-[protein] + H2O = L-glutamyl-[protein] + NH4(+). Functionally, involved in chemotaxis. Part of a chemotaxis signal transduction system that modulates chemotaxis in response to various stimuli. Catalyzes the demethylation of specific methylglutamate residues introduced into the chemoreceptors (methyl-accepting chemotaxis proteins or MCP) by CheR. Also mediates the irreversible deamidation of specific glutamine residues to glutamic acid. The protein is Protein-glutamate methylesterase/protein-glutamine glutaminase 1 of Burkholderia lata (strain ATCC 17760 / DSM 23089 / LMG 22485 / NCIMB 9086 / R18194 / 383).